A 219-amino-acid chain; its full sequence is Protein YNG1 (219 aa).

Residues 155 to 204 (EVYCFCRNVSYGPMVACDNPACPFEWFHYGCVGLKQAPKGKWYCSKDCKE) form a PHD-type; degenerate zinc finger. 8 residues coordinate Zn(2+): C158, C160, C171, C176, H182, C185, C198, and C202.

Belongs to the ING family. In terms of assembly, component of the NuA3 histone acetyltransferase (HAT) complex. The NuA3 HAT complex has 2 functionally distinct forms that participate in transcription. The NuA3a HAT complex is composed of at least NTO1, SAS3, TAF14, YNG1 and EAF6. The NuA3b HAT complex contains an additional subunit, PDP3. Interacts with H3K4me3 and to a lesser extent with H3K4me2.

The protein resides in the nucleus. In terms of biological role, histone-binding component of the NuA3a histone acetyltransferase complex. Targets the NuA3a HAT complex via histone H3K4me3 to facilitate transcription initiation at promoter regions. SAS3 then acetylates H3K14, leading to transcription initiation at a subset of genes. YNG1 is required for the HAT activity of NuA3 but not for its integrity. Mediates the interaction of SAS3 with nucleosomes. The protein is Protein YNG1 (YNG1) of Saccharomyces cerevisiae (strain ATCC 204508 / S288c) (Baker's yeast).